Here is a 750-residue protein sequence, read N- to C-terminus: Photosystem I P700 chlorophyll a apoprotein A1 (750 aa).

A run of 8 helical transmembrane segments spans residues 70–93, 156–179, 195–219, 291–309, 346–369, 385–411, 433–455, and 531–549; these read VFSAHFGQLSIIFLWLSGMYFHGA, LYCTAIGALVFAALMLFAGWFHYH, LNHHLAGLLGLGSLSWAGHQVHVSL, IAHHHLAIAILFLIAGHMY, WHAQLSLNLAMLGSLTIVVAHHMY, LSLFTHHMWIGGFLIVGAAAHAAIFMV, AIISHLNWVCIFLGFHSFGLYIH, and FLVHHIHAFTIHVTVLILL. Residues C573 and C582 each coordinate [4Fe-4S] cluster. 2 helical membrane-spanning segments follow: residues 589–610 and 664–686; these read HVFLGLFWMYNAISVVIFHFSW and LSAYGLFFLGAHFVWAFSLMFLF. Residue H675 coordinates chlorophyll a'. The chlorophyll a site is built by M683 and Y691. W692 is a binding site for phylloquinone. The chain crosses the membrane as a helical span at residues 724-744; that stretch reads AVGVTHYLLGGIATTWAFFLA.

Belongs to the PsaA/PsaB family. As to quaternary structure, the PsaA/B heterodimer binds the P700 chlorophyll special pair and subsequent electron acceptors. PSI consists of a core antenna complex that captures photons, and an electron transfer chain that converts photonic excitation into a charge separation. The eukaryotic PSI reaction center is composed of at least 11 subunits. P700 is a chlorophyll a/chlorophyll a' dimer, A0 is one or more chlorophyll a, A1 is one or both phylloquinones and FX is a shared 4Fe-4S iron-sulfur center. serves as cofactor.

The protein localises to the plastid. The protein resides in the chloroplast thylakoid membrane. It carries out the reaction reduced [plastocyanin] + hnu + oxidized [2Fe-2S]-[ferredoxin] = oxidized [plastocyanin] + reduced [2Fe-2S]-[ferredoxin]. Functionally, psaA and PsaB bind P700, the primary electron donor of photosystem I (PSI), as well as the electron acceptors A0, A1 and FX. PSI is a plastocyanin-ferredoxin oxidoreductase, converting photonic excitation into a charge separation, which transfers an electron from the donor P700 chlorophyll pair to the spectroscopically characterized acceptors A0, A1, FX, FA and FB in turn. Oxidized P700 is reduced on the lumenal side of the thylakoid membrane by plastocyanin. The protein is Photosystem I P700 chlorophyll a apoprotein A1 of Eucalyptus globulus subsp. globulus (Tasmanian blue gum).